The primary structure comprises 248 residues: Triosephosphate isomerase (248 aa).

Substrate is bound at residue asparagine 9 to lysine 11. Residue histidine 94 is the Electrophile of the active site. Catalysis depends on glutamate 166, which acts as the Proton acceptor. Substrate-binding positions include glycine 172, serine 212, and glycine 233–glycine 234.

It belongs to the triosephosphate isomerase family. In terms of assembly, homodimer.

Its subcellular location is the cytoplasm. The enzyme catalyses D-glyceraldehyde 3-phosphate = dihydroxyacetone phosphate. The protein operates within carbohydrate biosynthesis; gluconeogenesis. It participates in carbohydrate degradation; glycolysis; D-glyceraldehyde 3-phosphate from glycerone phosphate: step 1/1. In terms of biological role, involved in the gluconeogenesis. Catalyzes stereospecifically the conversion of dihydroxyacetone phosphate (DHAP) to D-glyceraldehyde-3-phosphate (G3P). The chain is Triosephosphate isomerase from Clostridium botulinum (strain Loch Maree / Type A3).